We begin with the raw amino-acid sequence, 275 residues long: Exosome complex component Rrp42 (275 aa).

The protein belongs to the RNase PH family. Rrp42 subfamily. As to quaternary structure, component of the archaeal exosome complex. Forms a hexameric ring-like arrangement composed of 3 Rrp41-Rrp42 heterodimers. The hexameric ring associates with a trimer of Rrp4 and/or Csl4 subunits.

It is found in the cytoplasm. In terms of biological role, non-catalytic component of the exosome, which is a complex involved in RNA degradation. Contributes to the structuring of the Rrp41 active site. In Sulfurisphaera tokodaii (strain DSM 16993 / JCM 10545 / NBRC 100140 / 7) (Sulfolobus tokodaii), this protein is Exosome complex component Rrp42.